Consider the following 127-residue polypeptide: uncharacterized protein (127 aa).

This is an uncharacterized protein from Acidianus two-tailed virus (ATV).